A 151-amino-acid chain; its full sequence is uncharacterized protein (151 aa).

Residues 89 to 151 (MNKVKDLRDR…AQKQAEQLNR (63 aa)) form a disordered region. Basic and acidic residues-rich tracts occupy residues 91-105 (KVKD…DKTD) and 112-151 (DMRE…QLNR).

The protein to C.plantagineum desiccation-related protein clone PCC3-06.

This is an uncharacterized protein from Bacillus subtilis (strain 168).